The sequence spans 199 residues: Recombination protein RecR (199 aa).

The C4-type zinc finger occupies 57 to 72; the sequence is CQSCRTFTEQDLCPIC. Residues 81–176 form the Toprim domain; the sequence is GIICVVETPA…VISRIAHGVP (96 aa).

The protein belongs to the RecR family.

Functionally, may play a role in DNA repair. It seems to be involved in an RecBC-independent recombinational process of DNA repair. It may act with RecF and RecO. This chain is Recombination protein RecR, found in Shewanella frigidimarina (strain NCIMB 400).